A 205-amino-acid polypeptide reads, in one-letter code: Methylthioribulose-1-phosphate dehydratase (205 aa).

2 residues coordinate Zn(2+): His-96 and His-98.

This sequence belongs to the aldolase class II family. MtnB subfamily. Requires Zn(2+) as cofactor.

The enzyme catalyses 5-(methylsulfanyl)-D-ribulose 1-phosphate = 5-methylsulfanyl-2,3-dioxopentyl phosphate + H2O. It functions in the pathway amino-acid biosynthesis; L-methionine biosynthesis via salvage pathway; L-methionine from S-methyl-5-thio-alpha-D-ribose 1-phosphate: step 2/6. Catalyzes the dehydration of methylthioribulose-1-phosphate (MTRu-1-P) into 2,3-diketo-5-methylthiopentyl-1-phosphate (DK-MTP-1-P). This Pseudomonas aeruginosa (strain LESB58) protein is Methylthioribulose-1-phosphate dehydratase.